The following is a 101-amino-acid chain: MKEQKIRVKLKAFDIELIDQSAQSIVASVKKTGARVSGPIPLPTSIRKVTVIRSPHVNIKSREQFEMRVYKRLIDIFDVTPQTTESLKKLALPAGVDVQLK.

It belongs to the universal ribosomal protein uS10 family. In terms of assembly, part of the 30S ribosomal subunit.

In terms of biological role, involved in the binding of tRNA to the ribosomes. The sequence is that of Small ribosomal subunit protein uS10 from Brachyspira pilosicoli (Serpulina pilosicoli).